The chain runs to 571 residues: Phosphoenolpyruvate-protein phosphotransferase (571 aa).

His-203 acts as the Tele-phosphohistidine intermediate in catalysis. Residues Arg-306 and Arg-342 each coordinate phosphoenolpyruvate. Positions 429 and 453 each coordinate Mg(2+). Phosphoenolpyruvate is bound by residues 452–453 (ND) and Arg-463. The active-site Proton donor is Cys-500.

The protein belongs to the PEP-utilizing enzyme family. As to quaternary structure, homodimer. Mg(2+) is required as a cofactor.

Its subcellular location is the cytoplasm. The catalysed reaction is L-histidyl-[protein] + phosphoenolpyruvate = N(pros)-phospho-L-histidyl-[protein] + pyruvate. General (non sugar-specific) component of the phosphoenolpyruvate-dependent sugar phosphotransferase system (sugar PTS). This major carbohydrate active-transport system catalyzes the phosphorylation of incoming sugar substrates concomitantly with their translocation across the cell membrane. Enzyme I transfers the phosphoryl group from phosphoenolpyruvate (PEP) to the phosphoryl carrier protein (HPr). The chain is Phosphoenolpyruvate-protein phosphotransferase (ptsI) from Chlamydia pneumoniae (Chlamydophila pneumoniae).